The following is a 337-amino-acid chain: Probable poly [ADP-ribose] polymerase DDB_G0278045 (337 aa).

The PARP catalytic domain maps to 21–231 (KKWDIIYKQR…NNNKNKNKNN (211 aa)). Residues 218–242 (NNTNNNNKNKNKNNNKNNNKNIKIQ) are compositionally biased toward low complexity. The segment at 218–247 (NNTNNNNKNKNKNNNKNNNKNIKIQNENKN) is disordered.

It catalyses the reaction L-aspartyl-[protein] + NAD(+) = 4-O-(ADP-D-ribosyl)-L-aspartyl-[protein] + nicotinamide. The catalysed reaction is L-glutamyl-[protein] + NAD(+) = 5-O-(ADP-D-ribosyl)-L-glutamyl-[protein] + nicotinamide. It carries out the reaction NAD(+) + (ADP-D-ribosyl)n-acceptor = nicotinamide + (ADP-D-ribosyl)n+1-acceptor + H(+).. This chain is Probable poly [ADP-ribose] polymerase DDB_G0278045, found in Dictyostelium discoideum (Social amoeba).